Reading from the N-terminus, the 801-residue chain is Protocadherin beta-8 (801 aa).

Residues 1–29 (MEASGKLICRQRQVLFSFLLLGLSLAGAA) form the signal peptide. The Extracellular segment spans residues 30–691 (EPRSYSVVEE…GQADSLTVYL (662 aa)). 5 Cadherin domains span residues 36 to 134 (VVEE…SPVF), 139 to 243 (MLVK…APEF), 248 to 348 (YRVQ…APEV), 353 to 452 (FTSP…APAF), and 457 to 562 (YTLF…SPFV). The cysteines at positions 97 and 103 are disulfide-linked. 2 N-linked (GlcNAc...) asparagine glycosylation sites follow: N419 and N437. N-linked (GlcNAc...) asparagine glycosylation is present at N568. The region spanning 569-672 (GSAPCTELVP…LVDGFSQPYL (104 aa)) is the Cadherin 6 domain. Residues 692-710 (VVALASVSSLFLFSVLLFV) traverse the membrane as a helical segment. The Cytoplasmic portion of the chain corresponds to 711–801 (AVLLCRRSRA…NGFGFSLQLK (91 aa)).

In terms of assembly, forms homodimers in trans (molecules expressed by two different cells). Forms promiscuous heterodimers in cis (at the plasma membrane of the same cell) with other protocadherins.

Its subcellular location is the cell membrane. Functionally, calcium-dependent cell-adhesion protein involved in cells self-recognition and non-self discrimination. Thereby, it is involved in the establishment and maintenance of specific neuronal connections in the brain. The sequence is that of Protocadherin beta-8 from Homo sapiens (Human).